Consider the following 762-residue polypeptide: FAST kinase domain-containing protein 5, mitochondrial (762 aa).

The residue at position 95 (S95) is a Phosphoserine. The residue at position 506 (K506) is an N6-acetyllysine. Residues 695–755 (LAIQFTNKNQ…RLEKLAYLHE (61 aa)) form the RAP domain.

The protein belongs to the FAST kinase family. In terms of assembly, found in a complex with GRSF1, DDX28, DHX30 and FASTKD2. Associates with the 12S mitochondrial rRNA (12S mt-rRNA). Expression detected in spleen, testis, colon, heart, smooth muscle, kidney, brain, lung, liver, brown and white adipose tissue.

The protein resides in the mitochondrion matrix. Its subcellular location is the mitochondrion nucleoid. Plays an important role in the processing of non-canonical mitochondrial mRNA precursors. This chain is FAST kinase domain-containing protein 5, mitochondrial (Fastkd5), found in Mus musculus (Mouse).